The chain runs to 394 residues: Probable sugar efflux transporter (394 aa).

Helical transmembrane passes span Val15–Leu35, Val50–Leu70, Met79–Trp99, Ile109–Val129, Gln137–Gly157, Ile168–Leu188, Pro209–Tyr229, Phe249–Gly269, Phe272–Tyr292, Leu299–Val319, Val333–Gly353, and Met362–Trp382.

Belongs to the major facilitator superfamily. SotB (TC 2.A.1.2) family.

It is found in the cell inner membrane. Functionally, involved in the efflux of sugars. The physiological role may be the reduction of the intracellular concentration of toxic sugars or sugar metabolites. The sequence is that of Probable sugar efflux transporter from Erwinia tasmaniensis (strain DSM 17950 / CFBP 7177 / CIP 109463 / NCPPB 4357 / Et1/99).